The following is a 130-amino-acid chain: Small ribosomal subunit protein uS9 (130 aa).

Belongs to the universal ribosomal protein uS9 family.

The chain is Small ribosomal subunit protein uS9 from Caldicellulosiruptor saccharolyticus (strain ATCC 43494 / DSM 8903 / Tp8T 6331).